We begin with the raw amino-acid sequence, 412 residues long: Glucose-1-phosphate adenylyltransferase (412 aa).

Residues Gly-169, 184–185, and Ser-201 each bind alpha-D-glucose 1-phosphate; that span reads EK.

This sequence belongs to the bacterial/plant glucose-1-phosphate adenylyltransferase family. Homotetramer.

It catalyses the reaction alpha-D-glucose 1-phosphate + ATP + H(+) = ADP-alpha-D-glucose + diphosphate. It participates in glycan biosynthesis; glycogen biosynthesis. Involved in the biosynthesis of ADP-glucose, a building block required for the elongation reactions to produce glycogen. Catalyzes the reaction between ATP and alpha-D-glucose 1-phosphate (G1P) to produce pyrophosphate and ADP-Glc. The sequence is that of Glucose-1-phosphate adenylyltransferase from Geobacter metallireducens (strain ATCC 53774 / DSM 7210 / GS-15).